The sequence spans 393 residues: S-adenosylmethionine synthase (393 aa).

An ATP-binding site is contributed by H16. D18 is a binding site for Mg(2+). E44 serves as a coordination point for K(+). Positions 57 and 100 each coordinate L-methionine. The flexible loop stretch occupies residues 100 to 110 (QSNDIAQGVDH). Residues 167-169 (DAK), 238-239 (RF), D247, 253-254 (RK), A270, and K274 each bind ATP. Position 247 (D247) interacts with L-methionine. K278 lines the L-methionine pocket.

This sequence belongs to the AdoMet synthase family. Homotetramer; dimer of dimers. It depends on Mg(2+) as a cofactor. The cofactor is K(+).

The protein resides in the cytoplasm. It catalyses the reaction L-methionine + ATP + H2O = S-adenosyl-L-methionine + phosphate + diphosphate. It functions in the pathway amino-acid biosynthesis; S-adenosyl-L-methionine biosynthesis; S-adenosyl-L-methionine from L-methionine: step 1/1. In terms of biological role, catalyzes the formation of S-adenosylmethionine (AdoMet) from methionine and ATP. The overall synthetic reaction is composed of two sequential steps, AdoMet formation and the subsequent tripolyphosphate hydrolysis which occurs prior to release of AdoMet from the enzyme. The chain is S-adenosylmethionine synthase from Leptothrix cholodnii (strain ATCC 51168 / LMG 8142 / SP-6) (Leptothrix discophora (strain SP-6)).